A 105-amino-acid chain; its full sequence is Vacuolar ATPase assembly integral membrane protein VMA21 homolog (105 aa).

The disordered stretch occupies residues 1 to 26 (MSTKNKKAAGGNGVAPKQTRQQSHDS). The Cytoplasmic segment spans residues 1–36 (MSTKNKKAAGGNGVAPKQTRQQSHDSQDYSSFKTVL). A helical membrane pass occupies residues 37 to 57 (FYCMLIVFLPVLTFFVLKGFV). Over 58 to 68 (LDQFLDISEVK) the chain is Lumenal. A helical transmembrane segment spans residues 69–89 (VNIASAVGAVVALHIALGLYI). Over 90–105 (YRAYFGAPGSKGSKTD) the chain is Cytoplasmic.

This sequence belongs to the VMA21 family.

The protein localises to the endoplasmic reticulum membrane. The protein resides in the endoplasmic reticulum-Golgi intermediate compartment membrane. It localises to the cytoplasmic vesicle. It is found in the COPII-coated vesicle membrane. In terms of biological role, required for the assembly of the V0 complex of the vacuolar ATPase (V-ATPase) in the endoplasmic reticulum. The polypeptide is Vacuolar ATPase assembly integral membrane protein VMA21 homolog (Drosophila melanogaster (Fruit fly)).